The sequence spans 311 residues: p-hydroxybenzoic acid efflux pump subunit AaeA (311 aa).

Residues 11–31 (VGITVLVVVLAVIAIFNVWAF) traverse the membrane as a helical segment.

Belongs to the membrane fusion protein (MFP) (TC 8.A.1) family.

Its subcellular location is the cell inner membrane. In terms of biological role, forms an efflux pump with AaeB. In Yersinia pestis bv. Antiqua (strain Antiqua), this protein is p-hydroxybenzoic acid efflux pump subunit AaeA.